Here is a 758-residue protein sequence, read N- to C-terminus: MTSPCSARLQLDENLQLMQAGSPMRKVKSRSWKKQRYFKLQEDCMTIWYNSKKTGNTKSTFSISDIETVREGHQSEVLQSIAEEFKPELCFTIVFHGRRANLDLVANTPEEAQCWIQGLEKLIETVTNMDRKDLMDQWICDWFQKADKNKDGRMNFKEVQDLLKMMNVDMSEHHAFRLFQMADKSESGTLEGEEFVLFYKALTQRDEVLKIFQDFSKDGKKLTLLEFVDFLQQGQLEEENTEEIAMDLIARYEPSDTAKKLHAMSIDGFLVYLCSPEGSIFNVAHEQLYQDMMQPLCHYFISSSHNTYLMEDQIRGQSSIEGYIRALKRGCRCVEVDTWDGPNGEPIVYHGRTFTSKILFKDVISAIDKYAFRVSDYPVILSLENHCGVEQQDAMAQHLKSILGNKLVMSTLDGRIPVRLPSPDELRGKILLKGKKIGRLEDSLEEQPDDSLGEVSDEEENIEVEEERNEDKKRAKKSKERLSQELSDCVIYCKSVPFVSFQHSRAHYILYEMSSVTEYKARKLVREPGNDFVRHNAWQLMRIYPTGLRTDSSNYNPQDMWNVGCQMTALNFQTAGVEMDLNDGLFRQNARCGYVLKPSFMRHVETTFNPDQPQGTEGYSPVNLSILVISAQQLPKVENSKEGSIVDPLVRVEIFGVPIDQTKQETKYIENNGFNPMWYETLHFKIHVPELALVRFVVEDYDKTSRNDFVGQYTLPFKSIKSGYRHIHLLSRDGTKIPPASLFVHIRVTDASQPEQDT.

One can recognise a PH domain in the interval 16–124 (QLMQAGSPMR…WIQGLEKLIE (109 aa)). The tract at residues 26–53 (KVKSRSWKKQRYFKLQEDCMTIWYNSKK) is substrate binding. EF-hand domains are found at residues 134-169 (LMDQWICDWFQKADKNKDGRMNFKEVQDLLKMMNVD), 170-205 (MSEHHAFRLFQMADKSESGTLEGEEFVLFYKALTQR), and 206-237 (DEVLKIFQDFSKDGKKLTLLEFVDFLQQGQLE). Residues Asp147, Asn149, Asp151, Arg153, Glu158, Asp183, Ser185, Ser187, Thr189, and Glu194 each contribute to the Ca(2+) site. A GBA motif is present at residues 213–243 (QDFSKDGKKLTLLEFVDFLQQGQLEEENTEE). One can recognise a PI-PLC X-box domain in the interval 290–435 (QDMMQPLCHY…LRGKILLKGK (146 aa)). Residue His305 is part of the active site. Ca(2+) is bound by residues Asn306, Glu335, and Asp337. The active site involves His350. Glu384 serves as a coordination point for Ca(2+). Residues Lys433 and Lys435 each coordinate substrate. Residues 446–468 (EQPDDSLGEVSDEEENIEVEEER) show a composition bias toward acidic residues. Residues 446 to 479 (EQPDDSLGEVSDEEENIEVEEERNEDKKRAKKSK) are disordered. The PI-PLC Y-box domain occupies 486 to 602 (LSDCVIYCKS…GYVLKPSFMR (117 aa)). Substrate contacts are provided by Ser515 and Arg542. The region spanning 602–731 (RHVETTFNPD…SGYRHIHLLS (130 aa)) is the C2 domain. Residues Ile645, Asp647, Asn671, Asp700, Tyr701, and Asp702 each coordinate Ca(2+). The PDZ-binding signature appears at 726–729 (HIHL).

Ca(2+) is required as a cofactor.

It localises to the membrane. The protein localises to the nucleus. It is found in the cytoplasm. The protein resides in the endoplasmic reticulum. The catalysed reaction is a 1,2-diacyl-sn-glycero-3-phospho-(1D-myo-inositol-4,5-bisphosphate) + H2O = 1D-myo-inositol 1,4,5-trisphosphate + a 1,2-diacyl-sn-glycerol + H(+). The enzyme catalyses a 1,2-diacyl-sn-glycero-3-phospho-(1D-myo-inositol) + H2O = 1D-myo-inositol 1-phosphate + a 1,2-diacyl-sn-glycerol + H(+). Hydrolyzes the phosphatidylinositol 4,5-bisphosphate (PIP2) to generate 2 second messenger molecules diacylglycerol (DAG) and inositol 1,4,5-trisphosphate (IP3). DAG mediates the activation of protein kinase C (PKC), while IP3 releases Ca(2+) from intracellular stores. The sequence is that of 1-phosphatidylinositol 4,5-bisphosphate phosphodiesterase delta-4 (plcd4) from Xenopus laevis (African clawed frog).